The following is a 355-amino-acid chain: Holliday junction branch migration complex subunit RuvB (355 aa).

Residues 1–26 form a disordered region; that stretch reads MSIQTDDFASSSPAARRVVSTAPASP. Residues 5-196 are large ATPase domain (RuvB-L); sequence TDDFASSSPA…FGIVARLEFY (192 aa). Residues 9-22 are compositionally biased toward low complexity; it reads ASSSPAARRVVSTA. ATP contacts are provided by residues Leu35, Arg36, Gly77, Lys80, Thr81, Thr82, 143–145, Arg186, Tyr196, and Arg233; that span reads EDY. Thr81 is a binding site for Mg(2+). The small ATPAse domain (RuvB-S) stretch occupies residues 197 to 267; it reads SVEELARIVT…IADKALAMLD (71 aa). The head domain (RuvB-H) stretch occupies residues 270–355; that stretch reads PQGFDVMDRK…TTSGSELFDA (86 aa). The DNA site is built by Arg325 and Arg330.

Belongs to the RuvB family. As to quaternary structure, homohexamer. Forms an RuvA(8)-RuvB(12)-Holliday junction (HJ) complex. HJ DNA is sandwiched between 2 RuvA tetramers; dsDNA enters through RuvA and exits via RuvB. An RuvB hexamer assembles on each DNA strand where it exits the tetramer. Each RuvB hexamer is contacted by two RuvA subunits (via domain III) on 2 adjacent RuvB subunits; this complex drives branch migration. In the full resolvosome a probable DNA-RuvA(4)-RuvB(12)-RuvC(2) complex forms which resolves the HJ.

Its subcellular location is the cytoplasm. It carries out the reaction ATP + H2O = ADP + phosphate + H(+). Functionally, the RuvA-RuvB-RuvC complex processes Holliday junction (HJ) DNA during genetic recombination and DNA repair, while the RuvA-RuvB complex plays an important role in the rescue of blocked DNA replication forks via replication fork reversal (RFR). RuvA specifically binds to HJ cruciform DNA, conferring on it an open structure. The RuvB hexamer acts as an ATP-dependent pump, pulling dsDNA into and through the RuvAB complex. RuvB forms 2 homohexamers on either side of HJ DNA bound by 1 or 2 RuvA tetramers; 4 subunits per hexamer contact DNA at a time. Coordinated motions by a converter formed by DNA-disengaged RuvB subunits stimulates ATP hydrolysis and nucleotide exchange. Immobilization of the converter enables RuvB to convert the ATP-contained energy into a lever motion, pulling 2 nucleotides of DNA out of the RuvA tetramer per ATP hydrolyzed, thus driving DNA branch migration. The RuvB motors rotate together with the DNA substrate, which together with the progressing nucleotide cycle form the mechanistic basis for DNA recombination by continuous HJ branch migration. Branch migration allows RuvC to scan DNA until it finds its consensus sequence, where it cleaves and resolves cruciform DNA. This is Holliday junction branch migration complex subunit RuvB from Methylibium petroleiphilum (strain ATCC BAA-1232 / LMG 22953 / PM1).